The primary structure comprises 298 residues: MKQDLARIEQFLDALWLEKNLAENTLNAYRRDLSMMVEWLHHRGLTLATAQSDDLQALLAERLEGGYKATSSARLLSAVRRLFQYLYREKFREDDPSAHLASPKLPQRLPKDLSEAQVERLLQAPLIDQPLELRDKAMLEVLYATGLRVSELVGLTMSDISLRQGVVRVIGKGNKERLVPLGEEAVYWLETYLEHGRPWLLNGVSIDVLFPSQRAQQMTRQTLWHRIKHYAVLAGIDSEKLSPHVLRHAFATHLLNHGADLRVVQMLLGHSDLSTTQIYTHVATERLRQLHQQHHPRA.

Positions 2-87 (KQDLARIEQF…AVRRLFQYLY (86 aa)) constitute a Core-binding (CB) domain. Residues 108–292 (RLPKDLSEAQ…ATERLRQLHQ (185 aa)) enclose the Tyr recombinase domain. Active-site residues include Arg-148, Lys-172, His-244, Arg-247, and His-270. Tyr-279 serves as the catalytic O-(3'-phospho-DNA)-tyrosine intermediate.

The protein belongs to the 'phage' integrase family. XerD subfamily. As to quaternary structure, forms a cyclic heterotetrameric complex composed of two molecules of XerC and two molecules of XerD, in which XerC interacts with XerD via its C-terminal region, XerD interacts with XerC via its C-terminal region and so on.

It is found in the cytoplasm. FtsK may regulate the catalytic switch between XerC and XerD in the heterotetrameric complex during the two steps of the recombination process. Functionally, site-specific tyrosine recombinase, which acts by catalyzing the cutting and rejoining of the recombining DNA molecules. Binds cooperatively to specific DNA consensus sequences that are separated from XerC binding sites by a short central region, forming the heterotetrameric XerC-XerD complex that recombines DNA substrates. The complex is essential to convert dimers of the bacterial chromosome into monomers to permit their segregation at cell division. It also contributes to the segregational stability of plasmids. In the complex XerD specifically exchanges the bottom DNA strands. This Escherichia coli O157:H7 protein is Tyrosine recombinase XerD.